Reading from the N-terminus, the 346-residue chain is Dimethyladenosine transferase 1, mitochondrial (346 aa).

The transit peptide at 1 to 27 (MAASGKLSTCRLPPLPTIREIIKLLRL) directs the protein to the mitochondrion. Residues L38, G63, E85, K86, D111, V112, and N141 each coordinate S-adenosyl-L-methionine.

This sequence belongs to the class I-like SAM-binding methyltransferase superfamily. rRNA adenine N(6)-methyltransferase family. KsgA subfamily. Interacts with mitochondrial RNA polymerase POLRMT. Interacts with TFAM. Bound to the maturing mtSSU until the late stages of assembly. As to expression, ubiquitously expressed.

The protein resides in the mitochondrion. The catalysed reaction is adenosine(N)/adenosine(N+1) in rRNA + 4 S-adenosyl-L-methionine = N(6)-dimethyladenosine(N)/N(6)-dimethyladenosine(N+1) in rRNA + 4 S-adenosyl-L-homocysteine + 4 H(+). In terms of biological role, mitochondrial methyltransferase which uses S-adenosyl methionine to dimethylate two highly conserved adjacent adenosine residues (A1583 and A1584) within the loop of helix 45 at the 3-prime end of 12S rRNA, thereby regulating the assembly or stability of the small subunit of the mitochondrial ribosome. Also required for basal transcription of mitochondrial DNA, probably via its interaction with POLRMT and TFAM. Stimulates transcription independently of the methyltransferase activity. The polypeptide is Dimethyladenosine transferase 1, mitochondrial (Homo sapiens (Human)).